A 412-amino-acid chain; its full sequence is Argininosuccinate synthase (412 aa).

ATP-binding positions include 10–18 (AYSGGLDTS) and Ala-36. The L-citrulline site is built by Tyr-87 and Ser-92. The residue at position 87 (Tyr-87) is a Phosphotyrosine. N6-acetyllysine is present on Lys-112. Tyr-113 is modified (phosphotyrosine). Residue 115–123 (SHGATGKGN) participates in ATP binding. L-aspartate is bound by residues Thr-119, Asn-123, and Asp-124. Asn-123 provides a ligand contact to L-citrulline. Residue Arg-127 coordinates L-citrulline. An N6-acetyllysine; by CLOCK mark is found at Lys-165 and Lys-176. Ser-177 and Ser-180 each carry phosphoserine. Residues Ser-180 and Ser-189 each coordinate L-citrulline. A Phosphothreonine modification is found at Thr-219. The L-citrulline site is built by Glu-270 and Tyr-282.

The protein belongs to the argininosuccinate synthase family. Type 1 subfamily. In terms of assembly, homotetramer. Interacts with NMRAL1. Interacts with CLOCK; in a circadian manner. Forms tissue-specific complexes with ASL, SLC7A1, HSP90AA1 and nitric oxide synthase NOS1, NOS2 or NOS3; the complex regulates cell-autonomous L-arginine synthesis and citrulline recycling while channeling extracellular L-arginine to nitric oxide synthesis pathway. Post-translationally, acetylated by CLOCK in a circadian manner which negatively regulates its enzyme activity. Deacetylated by histone deacetylases.

The protein localises to the cytoplasm. Its subcellular location is the cytosol. It catalyses the reaction L-citrulline + L-aspartate + ATP = 2-(N(omega)-L-arginino)succinate + AMP + diphosphate + H(+). The protein operates within amino-acid biosynthesis; L-arginine biosynthesis; L-arginine from L-ornithine and carbamoyl phosphate: step 2/3. It functions in the pathway nitrogen metabolism; urea cycle; (N(omega)-L-arginino)succinate from L-aspartate and L-citrulline: step 1/1. One of the enzymes of the urea cycle, the metabolic pathway transforming neurotoxic amonia produced by protein catabolism into inocuous urea in the liver of ureotelic animals. Catalyzes the formation of arginosuccinate from aspartate, citrulline and ATP and together with ASL it is responsible for the biosynthesis of arginine in most body tissues. Indirectly, may be involved in the control of blood pressure. This Rattus norvegicus (Rat) protein is Argininosuccinate synthase.